Here is a 315-residue protein sequence, read N- to C-terminus: Cobalamin biosynthesis protein CobD (315 aa).

5 helical membrane-spanning segments follow: residues 54 to 74, 78 to 98, 152 to 172, 203 to 223, and 295 to 315; these read GLLFVLTVGMTGVVSWFILFL, IAYWLYVAVFVYLGYTTLAMT, ADGVIAPLFYLFIGGPVLALM, IANFIPARLAWFFLVIASFIL, and LLYTASTIAFIIFASIYLLLF.

It belongs to the CobD/CbiB family.

It is found in the cell membrane. It participates in cofactor biosynthesis; adenosylcobalamin biosynthesis. In terms of biological role, converts cobyric acid to cobinamide by the addition of aminopropanol on the F carboxylic group. This Listeria monocytogenes serotype 4b (strain F2365) protein is Cobalamin biosynthesis protein CobD.